Consider the following 63-residue polypeptide: Cytochrome c oxidase subunit 7C, mitochondrial (63 aa).

The N-terminal 16 residues, 1-16 (MLGHSIRRFTTSVVRR), are a transit peptide targeting the mitochondrion. The Mitochondrial matrix portion of the chain corresponds to 17-33 (SHYEEGPGKNLPFSVEN). Lys25 is modified (N6-acetyllysine; alternate). Lys25 is modified (N6-succinyllysine; alternate). The chain crosses the membrane as a helical span at residues 34-60 (KWTLLVKMCLFFGSAFSVPFLIVRHQL). Topologically, residues 61–63 (LKQ) are mitochondrial intermembrane.

This sequence belongs to the cytochrome c oxidase VIIc family. In terms of assembly, component of the cytochrome c oxidase (complex IV, CIV), a multisubunit enzyme composed of 14 subunits. The complex is composed of a catalytic core of 3 subunits MT-CO1, MT-CO2 and MT-CO3, encoded in the mitochondrial DNA, and 11 supernumerary subunits COX4I, COX5A, COX5B, COX6A, COX6B, COX6C, COX7A, COX7B, COX7C, COX8 and NDUFA4, which are encoded in the nuclear genome. The complex exists as a monomer or a dimer and forms supercomplexes (SCs) in the inner mitochondrial membrane with NADH-ubiquinone oxidoreductase (complex I, CI) and ubiquinol-cytochrome c oxidoreductase (cytochrome b-c1 complex, complex III, CIII), resulting in different assemblies (supercomplex SCI(1)III(2)IV(1) and megacomplex MCI(2)III(2)IV(2)). Interacts with RAB5IF.

Its subcellular location is the mitochondrion inner membrane. Its pathway is energy metabolism; oxidative phosphorylation. In terms of biological role, component of the cytochrome c oxidase, the last enzyme in the mitochondrial electron transport chain which drives oxidative phosphorylation. The respiratory chain contains 3 multisubunit complexes succinate dehydrogenase (complex II, CII), ubiquinol-cytochrome c oxidoreductase (cytochrome b-c1 complex, complex III, CIII) and cytochrome c oxidase (complex IV, CIV), that cooperate to transfer electrons derived from NADH and succinate to molecular oxygen, creating an electrochemical gradient over the inner membrane that drives transmembrane transport and the ATP synthase. Cytochrome c oxidase is the component of the respiratory chain that catalyzes the reduction of oxygen to water. Electrons originating from reduced cytochrome c in the intermembrane space (IMS) are transferred via the dinuclear copper A center (CU(A)) of subunit 2 and heme A of subunit 1 to the active site in subunit 1, a binuclear center (BNC) formed by heme A3 and copper B (CU(B)). The BNC reduces molecular oxygen to 2 water molecules using 4 electrons from cytochrome c in the IMS and 4 protons from the mitochondrial matrix. The protein is Cytochrome c oxidase subunit 7C, mitochondrial (COX7C) of Macaca fascicularis (Crab-eating macaque).